Consider the following 374-residue polypeptide: Alanine racemase (374 aa).

The Proton acceptor; specific for D-alanine role is filled by Lys-44. Lys-44 is subject to N6-(pyridoxal phosphate)lysine. Arg-139 serves as a coordination point for substrate. The active-site Proton acceptor; specific for L-alanine is Tyr-269. A substrate-binding site is contributed by Met-317.

It belongs to the alanine racemase family. Requires pyridoxal 5'-phosphate as cofactor.

It catalyses the reaction L-alanine = D-alanine. It functions in the pathway amino-acid biosynthesis; D-alanine biosynthesis; D-alanine from L-alanine: step 1/1. Functionally, catalyzes the interconversion of L-alanine and D-alanine. May also act on other amino acids. The protein is Alanine racemase (alr) of Bordetella avium (strain 197N).